A 442-amino-acid polypeptide reads, in one-letter code: uncharacterized protein (442 aa).

The interval 211 to 269 is disordered; it reads LDYSTDKPEDSESEDIELEDSESEDSESEDIDQHGGQGPDDDEFNANFDDPQFDEFDFG. Residues 221–240 show a composition bias toward acidic residues; the sequence is SESEDIELEDSESEDSESED.

It localises to the virion. This is an uncharacterized protein from Acanthamoeba polyphaga (Amoeba).